A 562-amino-acid polypeptide reads, in one-letter code: Serine/threonine-protein kinase STN7, chloroplastic (562 aa).

The N-terminal 45 residues, Met-1–Arg-45, are a transit peptide targeting the chloroplast. A Protein kinase domain is found at Phe-134 to Phe-452. ATP is bound by residues Leu-140–Val-148 and Lys-167. Asp-279 acts as the Proton acceptor in catalysis. At Ser-526 the chain carries Phosphoserine. Phosphothreonine is present on residues Thr-537 and Thr-541.

Belongs to the protein kinase superfamily. Ser/Thr protein kinase family. Phosphorylated.

The protein resides in the plastid. It is found in the chloroplast thylakoid membrane. The catalysed reaction is L-seryl-[protein] + ATP = O-phospho-L-seryl-[protein] + ADP + H(+). The enzyme catalyses L-threonyl-[protein] + ATP = O-phospho-L-threonyl-[protein] + ADP + H(+). In terms of biological role, serine/threonine protein kinase required for state transition by phosphorylating light-harvesting complex II outer antennae (LCHII). State transition plays a central role in response to environmental changes and allows to adjust to changing light conditions via the redistribution of light excitation energy between photosystem II (PSII) and photosystem I (PSI). Phosphorylates the minor light harvesting protein LHCB4.2/CP29 and is involved in the light-dependent phosphorylation of TSP9. Acts as a key component of the long-term response (LTR) signaling pathway. Mediates phosphorylation-dependent PTAC16 subcellular localization to regulate plastid gene expression. This Arabidopsis thaliana (Mouse-ear cress) protein is Serine/threonine-protein kinase STN7, chloroplastic (STN7).